The following is a 381-amino-acid chain: Zinc finger CCCH domain-containing protein 61 (381 aa).

Positions 1-39 (MDVEHHKSGHISRPTVDIPPRKLLSSAKSPSSVSSPLRD) are disordered. Low complexity predominate over residues 21-37 (RKLLSSAKSPSSVSSPL). C3H1-type zinc fingers lie at residues 101-128 (YTGEVCPEFSRHGDCSRGDECGFAHGVF) and 137-159 (YRTEACKDGKHCKRKVCFFAHSP).

As to quaternary structure, interacts with MARD1/FLZ9 and RD21A via its CCCH zing finger domains.

The protein resides in the cytoplasm. Its subcellular location is the stress granule. The protein localises to the P-body. The chain is Zinc finger CCCH domain-containing protein 61 from Arabidopsis thaliana (Mouse-ear cress).